A 356-amino-acid polypeptide reads, in one-letter code: Nuclear hormone receptor family member nhr-169 (356 aa).

A DNA-binding region (nuclear receptor) is located at residues aspartate 16–glutamate 90. 2 consecutive NR C4-type zinc fingers follow at residues cysteine 19 to cysteine 40 and cysteine 56 to cysteine 72. The NR LBD domain maps to aspartate 144 to phenylalanine 356.

The protein belongs to the nuclear hormone receptor family.

The protein localises to the nucleus. Its function is as follows. Orphan nuclear receptor. This Caenorhabditis elegans protein is Nuclear hormone receptor family member nhr-169 (nhr-169).